The chain runs to 375 residues: uncharacterized protein (375 aa).

The next 7 helical transmembrane spans lie at 21–41, 66–86, 160–180, 203–223, 234–254, 289–309, and 338–358; these read LLLLIPLLVGLTLIIYGIVLF, IIVFVVGSIILFFTLASFCVS, LVGVLIALNLALSLIEIPGIV, LVGLLSTSLVALITPWLHLLI, FYMVNDFLVLWIFYFFFFHLF, VISFLCGFIEGLGFYFGYFLI, and FFLMTTTAIFSIKYIFEMLFF.

The protein resides in the cell membrane. This is an uncharacterized protein from Mycoplasma genitalium (strain ATCC 33530 / DSM 19775 / NCTC 10195 / G37) (Mycoplasmoides genitalium).